The sequence spans 43 residues: uncharacterized protein (43 aa).

2 stretches are compositionally biased toward polar residues: residues 1 to 19 (MSQKLSFFQQNTRNGSGAS) and 33 to 43 (PENSISKTFSK). Positions 1–43 (MSQKLSFFQQNTRNGSGASRTLVIKPPTIQPKPENSISKTFSK) are disordered.

This is an uncharacterized protein from Dictyostelium discoideum (Social amoeba).